The chain runs to 380 residues: Glucose-1-phosphate adenylyltransferase (380 aa).

Alpha-D-glucose 1-phosphate contacts are provided by residues Gly164, 179–180 (EK), and Ser190.

This sequence belongs to the bacterial/plant glucose-1-phosphate adenylyltransferase family. Homotetramer.

The enzyme catalyses alpha-D-glucose 1-phosphate + ATP + H(+) = ADP-alpha-D-glucose + diphosphate. It functions in the pathway glycan biosynthesis; glycogen biosynthesis. Its function is as follows. Involved in the biosynthesis of ADP-glucose, a building block required for the elongation reactions to produce glycogen. Catalyzes the reaction between ATP and alpha-D-glucose 1-phosphate (G1P) to produce pyrophosphate and ADP-Glc. The chain is Glucose-1-phosphate adenylyltransferase from Ligilactobacillus salivarius (strain UCC118) (Lactobacillus salivarius).